The chain runs to 560 residues: 2-succinyl-5-enolpyruvyl-6-hydroxy-3-cyclohexene-1-carboxylate synthase (560 aa).

It belongs to the TPP enzyme family. MenD subfamily. In terms of assembly, homodimer. Mg(2+) is required as a cofactor. It depends on Mn(2+) as a cofactor. The cofactor is thiamine diphosphate.

The catalysed reaction is isochorismate + 2-oxoglutarate + H(+) = 5-enolpyruvoyl-6-hydroxy-2-succinyl-cyclohex-3-ene-1-carboxylate + CO2. It functions in the pathway quinol/quinone metabolism; 1,4-dihydroxy-2-naphthoate biosynthesis; 1,4-dihydroxy-2-naphthoate from chorismate: step 2/7. It participates in quinol/quinone metabolism; menaquinone biosynthesis. In terms of biological role, catalyzes the thiamine diphosphate-dependent decarboxylation of 2-oxoglutarate and the subsequent addition of the resulting succinic semialdehyde-thiamine pyrophosphate anion to isochorismate to yield 2-succinyl-5-enolpyruvyl-6-hydroxy-3-cyclohexene-1-carboxylate (SEPHCHC). The chain is 2-succinyl-5-enolpyruvyl-6-hydroxy-3-cyclohexene-1-carboxylate synthase from Pectobacterium atrosepticum (strain SCRI 1043 / ATCC BAA-672) (Erwinia carotovora subsp. atroseptica).